The chain runs to 1869 residues: Chitin synthase 6 (1869 aa).

Residues 1 to 23 are disordered; it reads MAMNLPPLAGSGGAHTQPSLPAL. Positions 1–778 constitute a Myosin motor domain; the sequence is MAMNLPPLAG…EIAHLSEASL (778 aa). 104–111 provides a ligand contact to ATP; that stretch reads GESGSGKS. N-linked (GlcNAc...) asparagine glycans are attached at residues Asn-123, Asn-417, Asn-426, and Asn-557. Disordered stretches follow at residues 593–612 and 620–640; these read KPMR…ARNQ and AEEE…AAKA. The segment covering 629–640 has biased composition (low complexity); it reads ENNSQAGGAAKA. N-linked (GlcNAc...) asparagine glycans are attached at residues Asn-630 and Asn-657. Residues 655 to 679 form an actin-binding region; the sequence is LDNVTKAVADPSTNSYFVFCLKPND. Transmembrane regions (helical) follow at residues 886 to 906 and 925 to 945; these read WLFM…RFIG and LIIW…PMLI. In terms of domain architecture, Cytochrome b5 heme-binding spans 949–1010; that stretch reads QHVYSAAELS…YAGKDATSLF (62 aa). Residues Asn-1037, Asn-1062, and Asn-1165 are each glycosylated (N-linked (GlcNAc...) asparagine). The helical transmembrane segment at 1201–1221 threads the bilayer; the sequence is LVLAISIMLVTIIAFKFFAAL. N-linked (GlcNAc...) asparagine glycosylation is found at Asn-1458 and Asn-1564. 3 helical membrane passes run 1596–1616, 1622–1642, and 1649–1669; these read LSTV…VMVI, VPVT…IIFI, and MIGW…GLPL. An N-linked (GlcNAc...) asparagine glycan is attached at Asn-1778. Residues 1811 to 1866 form the DEK-C domain; it reads LPSDDALLAEIREILRTADLMTVTKKGIKQELERRFGVPLDAKRAYINSATEALLS.

It in the N-terminal section; belongs to the TRAFAC class myosin-kinesin ATPase superfamily. Myosin family. In the C-terminal section; belongs to the chitin synthase family. Class V subfamily.

The protein resides in the cell membrane. It carries out the reaction [(1-&gt;4)-N-acetyl-beta-D-glucosaminyl](n) + UDP-N-acetyl-alpha-D-glucosamine = [(1-&gt;4)-N-acetyl-beta-D-glucosaminyl](n+1) + UDP + H(+). Its function is as follows. Polymerizes chitin, a structural polymer of the cell wall and septum, by transferring the sugar moiety of UDP-GlcNAc to the non-reducing end of the growing chitin polymer. Plays a role in cell wall integrity and is involved in tolerance to hyperosmotic conditions. Required to successfully penetrate the host plants and thus plays a key role in pathogenicity. This chain is Chitin synthase 6, found in Verticillium dahliae (strain VdLs.17 / ATCC MYA-4575 / FGSC 10137) (Verticillium wilt).